A 25-amino-acid polypeptide reads, in one-letter code: Androctonin (25 aa).

Cystine bridges form between Cys4/Cys20 and Cys10/Cys16.

It localises to the secreted. In terms of biological role, active against both bacteria (Gram-positive and Gram-negative) and filamentous fungi. Acts on the membrane of the bacterial cells. It destabilize a membrane by modifying its properties. The protein is Androctonin of Androctonus australis (Sahara scorpion).